Reading from the N-terminus, the 210-residue chain is Fibroblast growth factor 8 (210 aa).

An N-terminal signal peptide occupies residues 1–27; that stretch reads MRLIPSRLSYLFLHLFAFCYYAQVTIQ.

Belongs to the heparin-binding growth factors family. As to quaternary structure, monomer. Homodimer.

It localises to the secreted. Its function is as follows. Plays an important role in the regulation of embryonic development, cell proliferation, cell differentiation and cell migration. Required for Kupffer's vesicle ciliogenesis. This chain is Fibroblast growth factor 8, found in Danio rerio (Zebrafish).